Here is a 581-residue protein sequence, read N- to C-terminus: Fibrous sheath-interacting protein 1 (581 aa).

The tract at residues 1–77 (MDIIKGNLDG…SNDDKQESCS (77 aa)) is disordered. The segment covering 14–30 (PASNSRIRPGSRSSNAS) has biased composition (polar residues). Residues 52-77 (GKEDHSESSNTENRRTSNDDKQESCS) are compositionally biased toward basic and acidic residues. Residue Ser-87 is modified to Phosphoserine. Residues 105–153 (EPKLKELDSQLQDAIQKMKKLDKILAKKQRREKEIKKQGLEMRIKLWEE) are a coiled coil. Disordered regions lie at residues 338–365 (SSFS…VTPG) and 555–581 (HLKL…CKEP). Composition is skewed to basic and acidic residues over residues 344–360 (LENR…ERNM) and 569–581 (QETK…CKEP).

The protein belongs to the FSIP1 family.

In Homo sapiens (Human), this protein is Fibrous sheath-interacting protein 1 (FSIP1).